A 317-amino-acid polypeptide reads, in one-letter code: Transaldolase (317 aa).

The active-site Schiff-base intermediate with substrate is the K126.

It belongs to the transaldolase family. Type 1 subfamily. Homodimer.

Its subcellular location is the cytoplasm. It carries out the reaction D-sedoheptulose 7-phosphate + D-glyceraldehyde 3-phosphate = D-erythrose 4-phosphate + beta-D-fructose 6-phosphate. It functions in the pathway carbohydrate degradation; pentose phosphate pathway; D-glyceraldehyde 3-phosphate and beta-D-fructose 6-phosphate from D-ribose 5-phosphate and D-xylulose 5-phosphate (non-oxidative stage): step 2/3. Functionally, transaldolase is important for the balance of metabolites in the pentose-phosphate pathway. The protein is Transaldolase of Burkholderia ambifaria (strain MC40-6).